The primary structure comprises 323 residues: Methionyl-tRNA formyltransferase (323 aa).

121-124 (SLLP) contacts (6S)-5,6,7,8-tetrahydrofolate.

This sequence belongs to the Fmt family.

The catalysed reaction is L-methionyl-tRNA(fMet) + (6R)-10-formyltetrahydrofolate = N-formyl-L-methionyl-tRNA(fMet) + (6S)-5,6,7,8-tetrahydrofolate + H(+). Its function is as follows. Attaches a formyl group to the free amino group of methionyl-tRNA(fMet). The formyl group appears to play a dual role in the initiator identity of N-formylmethionyl-tRNA by promoting its recognition by IF2 and preventing the misappropriation of this tRNA by the elongation apparatus. This is Methionyl-tRNA formyltransferase from Desulfotalea psychrophila (strain LSv54 / DSM 12343).